A 467-amino-acid polypeptide reads, in one-letter code: UDP-glycosyltransferase 71D2 (467 aa).

Residues serine 283, 339–341, 356–364, and 378–381 each bind UDP-alpha-D-glucose; these read SPQ, HCGWNSIVE, and YAEQ.

The protein belongs to the UDP-glycosyltransferase family.

In Arabidopsis thaliana (Mouse-ear cress), this protein is UDP-glycosyltransferase 71D2 (UGT71D2).